The sequence spans 287 residues: Bifunctional protein FolD (287 aa).

NADP(+) contacts are provided by residues 160 to 162 (GRS), Ser189, and Thr230.

The protein belongs to the tetrahydrofolate dehydrogenase/cyclohydrolase family. Homodimer.

It catalyses the reaction (6R)-5,10-methylene-5,6,7,8-tetrahydrofolate + NADP(+) = (6R)-5,10-methenyltetrahydrofolate + NADPH. The catalysed reaction is (6R)-5,10-methenyltetrahydrofolate + H2O = (6R)-10-formyltetrahydrofolate + H(+). Its pathway is one-carbon metabolism; tetrahydrofolate interconversion. In terms of biological role, catalyzes the oxidation of 5,10-methylenetetrahydrofolate to 5,10-methenyltetrahydrofolate and then the hydrolysis of 5,10-methenyltetrahydrofolate to 10-formyltetrahydrofolate. This Chlamydia trachomatis serovar D (strain ATCC VR-885 / DSM 19411 / UW-3/Cx) protein is Bifunctional protein FolD.